A 2115-amino-acid chain; its full sequence is Non-reducing polyketide synthase PFUR17_0229 (2115 aa).

The N-terminal acylcarrier protein transacylase (SAT) domain (SAT) stretch occupies residues Val8–His246. One can recognise a Ketosynthase family 3 (KS3) domain in the interval Ser367 to Asp796. Active-site for beta-ketoacyl synthase activity residues include Cys539, His674, and His713. Positions Ile895 to Ala1218 are malonyl-CoA:ACP transacylase (MAT) domain. A product template (PT) domain region spans residues Thr1279–Ser1592. An N-terminal hotdog fold region spans residues Leu1282–Gln1413. The PKS/mFAS DH domain occupies Leu1282–Gln1588. His1315 serves as the catalytic Proton acceptor; for dehydratase activity. Residues Val1441–Gln1588 are C-terminal hotdog fold. Asp1501 acts as the Proton donor; for dehydratase activity in catalysis. Residues Gly1594–Ser1613 are disordered. Residues Lys1626–Val1703 form the Carrier 1 domain. Ser1663 is modified (O-(pantetheine 4'-phosphoryl)serine). A disordered region spans residues Phe1710–Pro1742. Over residues Ser1718–Gly1733 the composition is skewed to low complexity. The 78-residue stretch at Pro1742–Ser1819 folds into the Carrier 2 domain. Ser1779 carries the O-(pantetheine 4'-phosphoryl)serine modification. The segment at Leu1861 to Met2097 is thioesterase (TE) domain.

Requires pantetheine 4'-phosphate as cofactor.

The catalysed reaction is 6 malonyl-CoA + 2 acetyl-CoA + 5 H(+) = o-orsellinate depside + 6 CO2 + 8 CoA + H2O. Functionally, non-reducing polyketide synthase; part of a gene cluster that mediates the biosynthesis of a yet unidentified depside/depsidone compound. The first step in the pathway is performed by the PKS PFUR17_0229 that condenses 2 acetyl-CoA starter units with 6 malonyl-CoA units to produce lecanoric acid (LA), also known as orsellinate depside. The biosynthesis occurs via the formation of 2 orsellinate intermediates fused together by the C-terminal thioesterase (TE) domain that finally releases lecanoric acid. In addition to the PKS gene, the PFUR17 gene cluster contains closely linked genes encoding a cytochrome P-450 and a laccase (phenol oxidase), directly upstream and downstream respectively, so it is likely that lecanoric acid is an intermediate in a longer biosynthetic pathway. The polypeptide is Non-reducing polyketide synthase PFUR17_0229 (Pseudevernia furfuracea (Tree moss)).